The sequence spans 1382 residues: Y' element ATP-dependent helicase protein 1 copy 4 (1382 aa).

The Helicase ATP-binding domain maps to 383-560; it reads EIYMADTPSV…LQRIGLTGLA (178 aa). Position 396–403 (396–403) interacts with ATP; that stretch reads APPGYGKT. The 150-residue stretch at 617–766 folds into the Helicase C-terminal domain; sequence KLLLALFEIE…EFYGLESKKG (150 aa). 2 disordered regions span residues 840-864 and 880-1007; these read ANASTNATTNSSTNATTTASTNVRT and TTES…DINK. Positions 880 to 983 are enriched in low complexity; it reads TTESTNSSTN…ATTTESTNAS (104 aa). The span at 984-1007 shows a compositional bias: basic and acidic residues; it reads AKEDANKDGNAEDNRFHPVTDINK.

The protein belongs to the helicase family. Yeast subtelomeric Y' repeat subfamily.

Catalyzes DNA unwinding and is involved in telomerase-independent telomere maintenance. In Saccharomyces cerevisiae (strain ATCC 204508 / S288c) (Baker's yeast), this protein is Y' element ATP-dependent helicase protein 1 copy 4 (YRF1-4).